A 428-amino-acid polypeptide reads, in one-letter code: tRNA modification GTPase MnmE (428 aa).

(6S)-5-formyl-5,6,7,8-tetrahydrofolate-binding residues include Arg20, Glu76, and Arg116. The TrmE-type G domain maps to 212–351; it reads GFEVAIVGAP…LVAAIGERLL (140 aa). Position 222 (Asn222) interacts with K(+). GTP-binding positions include 222-227, 241-247, and 266-269; these read NAGKST, SEIAGTT, and DTAG. Residue Ser226 participates in Mg(2+) binding. K(+) is bound by residues Ser241, Ile243, and Thr246. Thr247 is a Mg(2+) binding site. Lys428 contributes to the (6S)-5-formyl-5,6,7,8-tetrahydrofolate binding site.

This sequence belongs to the TRAFAC class TrmE-Era-EngA-EngB-Septin-like GTPase superfamily. TrmE GTPase family. In terms of assembly, homodimer. Heterotetramer of two MnmE and two MnmG subunits. Requires K(+) as cofactor.

It localises to the cytoplasm. Its function is as follows. Exhibits a very high intrinsic GTPase hydrolysis rate. Involved in the addition of a carboxymethylaminomethyl (cmnm) group at the wobble position (U34) of certain tRNAs, forming tRNA-cmnm(5)s(2)U34. The protein is tRNA modification GTPase MnmE of Cereibacter sphaeroides (strain ATCC 17029 / ATH 2.4.9) (Rhodobacter sphaeroides).